Consider the following 229-residue polypeptide: Ras-related protein rab-39 (229 aa).

A GTP-binding site is contributed by 73–77 (DTAGQ). Residues Cys-227 and Cys-229 are each lipidated (S-geranylgeranyl cysteine). At Cys-229 the chain carries Cysteine methyl ester.

Belongs to the small GTPase superfamily. Rab family. Interacts (in GTP-bound form) with Ras association domain-containing protein rsf-1.

It is found in the cell membrane. It localises to the cytoplasmic vesicle membrane. Its subcellular location is the golgi apparatus. Its function is as follows. Small GTPases Rab involved in autophagy. The small GTPases Rab are key regulators of intracellular membrane trafficking, from the formation of transport vesicles to their fusion with membranes. Rabs cycle between an inactive GDP-bound form and an active GTP-bound form that is able to recruit to membranes different sets of downstream effectors directly responsible for vesicle formation, movement, tethering and fusion. Involved in positively regulating the oxidative stress response, perhaps in concert with the Ras association domain-containing protein rsf-1. In Caenorhabditis elegans, this protein is Ras-related protein rab-39.